The following is a 139-amino-acid chain: uncharacterized protein (139 aa).

2 helical membrane passes run 35–55 (LVFL…SFLI) and 57–77 (FGIL…LTVI).

The protein resides in the membrane. This is an uncharacterized protein from Saccharomyces cerevisiae (strain ATCC 204508 / S288c) (Baker's yeast).